A 388-amino-acid polypeptide reads, in one-letter code: (S)-8-oxocitronellyl enol synthase ISY1 (388 aa).

Residues 35-37 (TGI), 63-64 (RR), 81-82 (DV), 105-106 (TW), and Gln-143 each bind NADP(+). Active-site residues include Lys-147 and Tyr-178. Residues Tyr-178, Ile-205, and 212–214 (SMM) each bind NADP(+).

It belongs to the short-chain dehydrogenases/reductases (SDR) family.

The enzyme catalyses (S)-8-oxocitronellyl enol + NADP(+) = (6E)-8-oxogeranial + NADPH + H(+). It catalyses the reaction (S)-8-oxocitronellyl enol + NAD(+) = (6E)-8-oxogeranial + NADH + H(+). In terms of biological role, iridoid synthase that catalyzes the first step in generation of the iridoid ring scaffold using the linear monoterpene (6E)-8-oxogeranial as substrate. Iridoids comprise a large family of distinctive bicyclic monoterpenes that possess a wide range of pharmacological activities, including anticancer, anti-inflammatory, antifungal and antibacterial activities. Catalyzes the conversion of the linear monoterpene (6E)-8-oxogeranial to (S)-8-oxocitronellyl enol, a precursor of nepetalactones, which are metabolites that are both insect-repellent and have euphoric effect in cats. In Nepeta cataria (Catnip), this protein is (S)-8-oxocitronellyl enol synthase ISY1.